The sequence spans 352 residues: Fe(3+) ions import ATP-binding protein FbpC (352 aa).

In terms of domain architecture, ABC transporter spans 5–239; that stretch reads LHIGHLSKSF…PADLDAALFI (235 aa). Position 37-44 (37-44) interacts with ATP; sequence GASGCGKT.

Belongs to the ABC transporter superfamily. Fe(3+) ion importer (TC 3.A.1.10) family. In terms of assembly, the complex is composed of two ATP-binding proteins (FbpC), two transmembrane proteins (FbpB) and a solute-binding protein (FbpA).

It localises to the cell inner membrane. It catalyses the reaction Fe(3+)(out) + ATP + H2O = Fe(3+)(in) + ADP + phosphate + H(+). Its function is as follows. Part of the ABC transporter complex FbpABC involved in Fe(3+) ions import. Responsible for energy coupling to the transport system. The chain is Fe(3+) ions import ATP-binding protein FbpC from Neisseria meningitidis serogroup A / serotype 4A (strain DSM 15465 / Z2491).